We begin with the raw amino-acid sequence, 335 residues long: MAVPAVSPQPILAPLTPAAIFLVATIGADGEATVHDALSKISGLVRAIGFRDPTKHLSVVVSIGSDAWDRLFAGPRPTELHPFVELTGPRHTAPATPGDLLFHIRAETMDVCFELAGRILKSMGDAVTVVDEVHGFRFFDNRDLLGFVDGTENPSGPIAIKATTIGDEDRNFAGSCYVHVQKYVHDMASWESLSVTEQERVIGRTKLDDIELDDNAKPANSHVALNVITDDDGTERKIVRHNMPFGEVGKGEYGTYFIGYSRTPTVTEQMLRNMFLGDPAGNTDRVLDFSTAVTGGLFFSPTIDFLDHPPPLPQAATPTLAAGSLSIGSLKGSPR.

Residue aspartate 149 is the Proton acceptor of the active site. Histidine 222 is a heme binding site. Residues 312–335 are targeting peptide; that stretch reads LPQAATPTLAAGSLSIGSLKGSPR.

The protein belongs to the DyP-type peroxidase family. As to quaternary structure, homotetramer, presumably also in the encapsulin nanocompartment. The cofactor is heme b.

It is found in the encapsulin nanocompartment. It catalyses the reaction 2 a phenolic donor + H2O2 = 2 a phenolic radical donor + 2 H2O. Functionally, cargo of a type 1 encapsulin nanocompartment in situ; this cargo protects against oxidative stress at low pH. When expressed in the cytoplasm (absence of the encapsulin shell gene) it is almost as protective as the intact nanocompartment; its encapsulation has a modest yet significant effect on protection against oxidative stress at low pH. A heme-dependent peroxidase, it probably does not have deferrochelatase activity. Converts guaiacol and H2O2 to tetraguaiacol, also acts on 2,2'-azino-bis(3-ethylbenzothiazoline-6-sulfonic acid) (ABTS). Retains peroxidase activity when encapsulated but has a reduced set of substrates; acts on ABTS but not guaiacol. This Mycobacterium tuberculosis (strain ATCC 25618 / H37Rv) protein is Dye-decolorizing peroxidase.